We begin with the raw amino-acid sequence, 282 residues long: MEKIFLNGEFVSPSEAKVSYNDRGYVFGDGIYEYIRVYNGKLFTVTEHYERFLRSANEIGLDLNYSVEELIELSRKLVDMNQIETGAIYIQATRGVAERNHSFPTPEVEPAIVAYTKSYDRPYDHLENGVNGVTVEDIRWLRCDIKSLNLLGNVLAKEYAVKYNAVEAIQHRGETVTEGSSSNAYAIKDGVIYTHPINNYILNGITRIVIKKIAEDYNIPFKEETFTVDFLKNADEVIVSSTSAEVTPVIKLDGEPINDGKVGPITRQLQEGFEKYIESHSI.

Residue Tyr-32 participates in substrate binding. A pyridoxal 5'-phosphate-binding site is contributed by Arg-51. 2 residues coordinate substrate: Arg-99 and His-101. Lys-146 (proton acceptor) is an active-site residue. Lys-146 carries the post-translational modification N6-(pyridoxal phosphate)lysine. Glu-178 lines the pyridoxal 5'-phosphate pocket.

Belongs to the class-IV pyridoxal-phosphate-dependent aminotransferase family. In terms of assembly, homodimer. Pyridoxal 5'-phosphate serves as cofactor.

The enzyme catalyses D-alanine + 2-oxoglutarate = D-glutamate + pyruvate. In terms of biological role, acts on the D-isomers of alanine, leucine, aspartate, glutamate, aminobutyrate, norvaline and asparagine. The enzyme transfers an amino group from a substrate D-amino acid to the pyridoxal phosphate cofactor to form pyridoxamine and an alpha-keto acid in the first half-reaction. The second half-reaction is the reverse of the first, transferring the amino group from the pyridoxamine to a second alpha-keto acid to form the product D-amino acid via a ping-pong mechanism. This is an important process in the formation of D-alanine and D-glutamate, which are essential bacterial cell wall components. The polypeptide is D-alanine aminotransferase (dat) (Staphylococcus aureus (strain N315)).